We begin with the raw amino-acid sequence, 620 residues long: Proline--tRNA ligase (620 aa).

The protein belongs to the class-II aminoacyl-tRNA synthetase family. ProS type 1 subfamily. Homodimer.

The protein resides in the cytoplasm. It carries out the reaction tRNA(Pro) + L-proline + ATP = L-prolyl-tRNA(Pro) + AMP + diphosphate. Catalyzes the attachment of proline to tRNA(Pro) in a two-step reaction: proline is first activated by ATP to form Pro-AMP and then transferred to the acceptor end of tRNA(Pro). As ProRS can inadvertently accommodate and process non-cognate amino acids such as alanine and cysteine, to avoid such errors it has two additional distinct editing activities against alanine. One activity is designated as 'pretransfer' editing and involves the tRNA(Pro)-independent hydrolysis of activated Ala-AMP. The other activity is designated 'posttransfer' editing and involves deacylation of mischarged Ala-tRNA(Pro). The misacylated Cys-tRNA(Pro) is not edited by ProRS. This Streptococcus thermophilus (strain CNRZ 1066) protein is Proline--tRNA ligase.